We begin with the raw amino-acid sequence, 487 residues long: Serine/threonine-protein kinase 4 (487 aa).

M1 bears the N-acetylmethionine mark. T3 bears the Phosphothreonine mark. In terms of domain architecture, Protein kinase spans 30–281; sequence FDVLEKLGEG…ATQLLQHPFV (252 aa). Residues 36–44 and K59 each bind ATP; that span reads LGEGSYGSV. The active-site Proton acceptor is D149. Phosphothreonine; by autocatalysis is present on T183. At S265 the chain carries Phosphoserine. Positions 290–310 form a coiled coil; the sequence is LRDLINEAMDVKLKRQESQQR. Positions 303 to 312 are enriched in basic and acidic residues; the sequence is KRQESQQREV. Positions 303-332 are disordered; that stretch reads KRQESQQREVDQDDEENSEEDEMDSGTMVR. Acidic residues predominate over residues 313–326; that stretch reads DQDDEENSEEDEMD. Residue S320 is modified to Phosphoserine. Phosphothreonine is present on residues T340 and T367. T387 bears the Phosphothreonine; by PKB/AKT1 mark. Phosphoserine occurs at positions 410 and 414. At Y433 the chain carries Phosphotyrosine. The region spanning 433–480 is the SARAH domain; sequence YEFLKSWTVEDLQKRLLALDPMMEQEIEEIRQKYQSKRQPILDAIEAK.

The protein belongs to the protein kinase superfamily. STE Ser/Thr protein kinase family. STE20 subfamily. In terms of assembly, homodimer; mediated via the coiled-coil region. Interacts with NORE1, which inhibits autoactivation. Interacts with and stabilizes SAV1. Interacts with RASSF1. Interacts with FOXO3. Interacts with RASSF2 (via SARAH domain). Interacts with AR, PKB/AKT1, TNNI3 and SIRT1. Interacts with DLG5 (via PDZ domain 3). Interacts with MARK3 and SCRIB in the presence of DLG5. The cofactor is Mg(2+). In terms of processing, autophosphorylated on serine and threonine residues. Phosphorylation at Thr-387 by PKB/AKT1, leads to inhibition of its: kinase activity, nuclear translocation and autophosphorylation at Thr-183. It also diminishes its cleavage by caspases and its ability to phosphorylate FOXO3. Proteolytically cleaved by caspase-3 during apoptosis at Asp-326 and Asp-349 resulting in a 37 kDa or a 39 kDa subunit respectively. The 39 kDa subunit is further cleaved into the 37 kDa form. Proteolytic cleavage results in kinase activation and nuclear translocation of the truncated form (MST1/N). It is less likely that cleavage at Asp-349 is a prerequisite for activation as this site is not conserved in the murine ortholog.

Its subcellular location is the cytoplasm. It localises to the nucleus. It catalyses the reaction L-seryl-[protein] + ATP = O-phospho-L-seryl-[protein] + ADP + H(+). It carries out the reaction L-threonyl-[protein] + ATP = O-phospho-L-threonyl-[protein] + ADP + H(+). Inhibited by the C-terminal non-catalytic region. Activated by caspase-cleavage. Full activation also requires homodimerization and autophosphorylation of Thr-183. Activated by RASSF1 which acts by preventing its dephosphorylation. Stress-activated, pro-apoptotic kinase which, following caspase-cleavage, enters the nucleus and induces chromatin condensation followed by internucleosomal DNA fragmentation. Key component of the Hippo signaling pathway which plays a pivotal role in organ size control and tumor suppression by restricting proliferation and promoting apoptosis. The core of this pathway is composed of a kinase cascade wherein STK3/MST2 and STK4/MST1, in complex with its regulatory protein SAV1, phosphorylates and activates LATS1/2 in complex with its regulatory protein MOB1, which in turn phosphorylates and inactivates YAP1 oncoprotein and WWTR1/TAZ. Phosphorylation of YAP1 by LATS2 inhibits its translocation into the nucleus to regulate cellular genes important for cell proliferation, cell death, and cell migration. STK3/MST2 and STK4/MST1 are required to repress proliferation of mature hepatocytes, to prevent activation of facultative adult liver stem cells (oval cells), and to inhibit tumor formation. Phosphorylates 'Ser-14' of histone H2B (H2BS14ph) during apoptosis. Phosphorylates FOXO3 upon oxidative stress, which results in its nuclear translocation and cell death initiation. Phosphorylates MOBKL1A, MOBKL1B and RASSF2. Phosphorylates TNNI3 (cardiac Tn-I) and alters its binding affinity to TNNC1 (cardiac Tn-C) and TNNT2 (cardiac Tn-T). Phosphorylates FOXO1 on 'Ser-212' and regulates its activation and stimulates transcription of PMAIP1 in a FOXO1-dependent manner. Phosphorylates SIRT1 and inhibits SIRT1-mediated p53/TP53 deacetylation, thereby promoting p53/TP53 dependent transcription and apoptosis upon DNA damage. Acts as an inhibitor of PKB/AKT1. Phosphorylates AR on 'Ser-650' and suppresses its activity by intersecting with PKB/AKT1 signaling and antagonizing formation of AR-chromatin complexes. This Macaca mulatta (Rhesus macaque) protein is Serine/threonine-protein kinase 4 (STK4).